The following is a 125-amino-acid chain: Protein ApaG (125 aa).

An ApaG domain is found at 1-125; it reads MADSPRVCVQ…FRLAVPTLIH (125 aa).

The chain is Protein ApaG from Cronobacter sakazakii (strain ATCC BAA-894) (Enterobacter sakazakii).